The primary structure comprises 393 residues: Dual specificity mitogen-activated protein kinase kinase 1 (393 aa).

The interval 1–26 is disordered; it reads MPKKKPTPIQLNPTPDGSAVNGTSSA. A compositionally biased stretch (polar residues) spans 9–26; that stretch reads IQLNPTPDGSAVNGTSSA. Residues 68 to 361 enclose the Protein kinase domain; that stretch reads FEKISELGAG…LKQLLVHAFI (294 aa). Residues 74–82 and K97 contribute to the ATP site; that span reads LGAGNGGVV. Residue D190 is the Proton acceptor of the active site. Residues S218 and S222 each carry the phosphoserine; by RAF modification. The interval 270–307 is RAF1-binding; the sequence is ELELLFGCQVEGDAAETPPRPRTPGRPLSSYGMDSRPP. Position 286 is a phosphothreonine (T286). T292 is subject to Phosphothreonine; by MAPK1. A Phosphoserine; by PAK modification is found at S298.

Belongs to the protein kinase superfamily. STE Ser/Thr protein kinase family. MAP kinase kinase subfamily. In terms of assembly, found in a complex with at least BRAF, HRAS, MAP2K1, MAPK3/ERK1 and RGS14. Forms a heterodimer with MAP2K2/MEK2. Forms heterodimers with KSR2 which further dimerize to form tetramers. Interacts with KSR1 or KSR2 and BRAF; the interaction with KSR1 or KSR2 mediates KSR1-BRAF or KSR2-BRAF dimerization. Interacts with ARBB2, LAMTOR3, MAPK1/ERK2 and RAF1. Interacts with MAPK1/ERK2. Interacts with MORG1. Interacts with PPARG. Interacts with isoform 1 of VRK2. Interacts with SGK1. Interacts with BIRC6/bruce. Interacts with KAT7; the interaction promotes KAT7 phosphorylation. Interacts with RAF1 and NEK10; the interaction is required for ERK1/2-signaling pathway activation in response to UV irradiation. Interacts with TRAF3IP3. Interacts with MOS. In terms of processing, phosphorylation at Ser-218 and Ser-222 by MAP kinase kinase kinases (BRAF or MEKK1) positively regulates the kinase activity. Also phosphorylated at Thr-292 by MAPK1/ERK2 and at Ser-298 by PAK. MAPK1/ERK2 phosphorylation of Thr-292 occurs in response to cellular adhesion and leads to inhibition of Ser-298 phosphorylation by PAK. Autophosphorylated at Ser-218 and Ser-222, autophosphosphorylation is promoted by NEK10 following UV irradiation.

The protein localises to the cytoplasm. Its subcellular location is the cytoskeleton. It localises to the microtubule organizing center. The protein resides in the centrosome. It is found in the spindle pole body. The protein localises to the nucleus. Its subcellular location is the membrane. The enzyme catalyses L-seryl-[protein] + ATP = O-phospho-L-seryl-[protein] + ADP + H(+). It carries out the reaction L-threonyl-[protein] + ATP = O-phospho-L-threonyl-[protein] + ADP + H(+). The catalysed reaction is L-tyrosyl-[protein] + ATP = O-phospho-L-tyrosyl-[protein] + ADP + H(+). Its activity is regulated as follows. Ras proteins such as HRAS mediate the activation of RAF proteins such as RAF1 or BRAF which in turn activate extracellular signal-regulated kinases (ERK) through MAPK (mitogen-activated protein kinases) and ERK kinases MAP2K1/MEK1 and MAP2K2/MEK2. Activation occurs through phosphorylation of Ser-218 and Ser-222. MAP2K1/MEK1 binds KSR1 or KSR2 releasing the inhibitory intramolecular interaction between KSR1 or KSR2 protein kinase and N-terminal domains. This allows KSR1 or KSR2 dimerization with BRAF leading to BRAF activation and phosphorylation of MAP2K1. MAP2K1/MEK1 is also the target of negative feed-back regulation by its substrate kinases, such as MAPK1/ERK2. These phosphorylate MAP2K1/MEK1 on Thr-292, thereby facilitating dephosphorylation of the activating residues Ser-218 and Ser-222. Inhibited by serine/threonine phosphatase 2A. Its function is as follows. Dual specificity protein kinase which acts as an essential component of the MAP kinase signal transduction pathway. Binding of extracellular ligands such as growth factors, cytokines and hormones to their cell-surface receptors activates RAS and this initiates RAF1 activation. RAF1 then further activates the dual-specificity protein kinases MAP2K1/MEK1 and MAP2K2/MEK2. Both MAP2K1/MEK1 and MAP2K2/MEK2 function specifically in the MAPK/ERK cascade, and catalyze the concomitant phosphorylation of a threonine and a tyrosine residue in a Thr-Glu-Tyr sequence located in the extracellular signal-regulated kinases MAPK3/ERK1 and MAPK1/ERK2, leading to their activation and further transduction of the signal within the MAPK/ERK cascade. Activates BRAF in a KSR1 or KSR2-dependent manner; by binding to KSR1 or KSR2 releases the inhibitory intramolecular interaction between KSR1 or KSR2 protein kinase and N-terminal domains which promotes KSR1 or KSR2-BRAF dimerization and BRAF activation. Depending on the cellular context, this pathway mediates diverse biological functions such as cell growth, adhesion, survival and differentiation, predominantly through the regulation of transcription, metabolism and cytoskeletal rearrangements. One target of the MAPK/ERK cascade is peroxisome proliferator-activated receptor gamma (PPARG), a nuclear receptor that promotes differentiation and apoptosis. MAP2K1/MEK1 has been shown to export PPARG from the nucleus. The MAPK/ERK cascade is also involved in the regulation of endosomal dynamics, including lysosome processing and endosome cycling through the perinuclear recycling compartment (PNRC), as well as in the fragmentation of the Golgi apparatus during mitosis. This chain is Dual specificity mitogen-activated protein kinase kinase 1 (MAP2K1), found in Cricetulus griseus (Chinese hamster).